The chain runs to 338 residues: Ketol-acid reductoisomerase (NADP(+)) (338 aa).

In terms of domain architecture, KARI N-terminal Rossmann spans 1 to 181; that stretch reads MQVYYDKDCD…GGGRTGIIET (181 aa). NADP(+) contacts are provided by residues 24-27, R47, S50, S52, and 82-85; these read YGSQ and DEFQ. Residue H107 is part of the active site. G133 is a binding site for NADP(+). A KARI C-terminal knotted domain is found at 182–327; the sequence is TFKDETETDL…EKLRAMMPWI (146 aa). Residues D190, E194, E226, and E230 each contribute to the Mg(2+) site. S251 lines the substrate pocket.

Belongs to the ketol-acid reductoisomerase family. Mg(2+) serves as cofactor.

The catalysed reaction is (2R)-2,3-dihydroxy-3-methylbutanoate + NADP(+) = (2S)-2-acetolactate + NADPH + H(+). It catalyses the reaction (2R,3R)-2,3-dihydroxy-3-methylpentanoate + NADP(+) = (S)-2-ethyl-2-hydroxy-3-oxobutanoate + NADPH + H(+). It functions in the pathway amino-acid biosynthesis; L-isoleucine biosynthesis; L-isoleucine from 2-oxobutanoate: step 2/4. Its pathway is amino-acid biosynthesis; L-valine biosynthesis; L-valine from pyruvate: step 2/4. Functionally, involved in the biosynthesis of branched-chain amino acids (BCAA). Catalyzes an alkyl-migration followed by a ketol-acid reduction of (S)-2-acetolactate (S2AL) to yield (R)-2,3-dihydroxy-isovalerate. In the isomerase reaction, S2AL is rearranged via a Mg-dependent methyl migration to produce 3-hydroxy-3-methyl-2-ketobutyrate (HMKB). In the reductase reaction, this 2-ketoacid undergoes a metal-dependent reduction by NADPH to yield (R)-2,3-dihydroxy-isovalerate. This is Ketol-acid reductoisomerase (NADP(+)) from Teredinibacter turnerae (strain ATCC 39867 / T7901).